A 132-amino-acid chain; its full sequence is Fatty acid-binding protein, adipocyte (132 aa).

At Cys2 the chain carries N-acetylcysteine. Residue Ser13 is modified to Phosphoserine. Residue Tyr20 is modified to Phosphotyrosine; by Tyr-kinases. The short motif at 22 to 32 (KEVGVGFATRK) is the Nuclear localization signal element. Residue 127-129 (RVY) coordinates a fatty acid.

This sequence belongs to the calycin superfamily. Fatty-acid binding protein (FABP) family. As to quaternary structure, monomer. Homodimer. Interacts with PPARG.

Its subcellular location is the cytoplasm. It is found in the nucleus. In terms of biological role, lipid transport protein in adipocytes. Binds both long chain fatty acids and retinoic acid. Delivers long-chain fatty acids and retinoic acid to their cognate receptors in the nucleus. This chain is Fatty acid-binding protein, adipocyte (Fabp4), found in Rattus norvegicus (Rat).